The chain runs to 58 residues: MLGWTLVFLVVAVIAGLFGFTGIAGAAAGIAKIIFFLFIVLLVISLLINALKGKSPRL.

2 consecutive transmembrane segments (helical) span residues 6 to 26 (LVFLVVAVIAGLFGFTGIAGA) and 28 to 48 (AGIAKIIFFLFIVLLVISLLI).

It belongs to the UPF0391 family.

It is found in the cell membrane. The protein is UPF0391 membrane protein Shew185_1413 of Shewanella baltica (strain OS185).